Consider the following 561-residue polypeptide: Zinc finger protein 394 (561 aa).

Serine 12 bears the Phosphoserine mark. Residue lysine 40 forms a Glycyl lysine isopeptide (Lys-Gly) (interchain with G-Cter in SUMO2) linkage. Residues 43–62 (EDSLGSWEPSYPAASPDPET) form a disordered region. An SCAN box domain is found at 64–146 (RLHFRQLRYQ…AVVRALQRAL (83 aa)). The region spanning 155-230 (VTFEDMAVSL…LQEAFQGKRP (76 aa)) is the KRAB domain. Glycyl lysine isopeptide (Lys-Gly) (interchain with G-Cter in SUMO2) cross-links involve residues lysine 203 and lysine 228. Residues 238–247 (THEDRVEKQS) show a composition bias toward basic and acidic residues. The interval 238-283 (THEDRVEKQSGDPLPLKLENSPEAEGFNSISDVNKNGSIEGEDSKN) is disordered. Residue lysine 254 forms a Glycyl lysine isopeptide (Lys-Gly) (interchain with G-Cter in SUMO2) linkage. Positions 265–274 (NSISDVNKNG) are enriched in polar residues. Residue lysine 282 forms a Glycyl lysine isopeptide (Lys-Gly) (interchain with G-Cter in SUMO2) linkage. 7 C2H2-type zinc fingers span residues 358–380 (YKCGNCGKSFKQRSDLFRHQRIH), 386–408 (YGCQECGKSFSQSAALTKHQRTH), 414–436 (YTCLKCGERFRQNSHLNRHQSTH), 442–463 (FKCEECGETCHISNLFRHQRLH), 469–491 (YKCEECEKSFKQRSDLFKHHRIH), 497–519 (YGCSVCGKRFNQSATLIKHQRIH), and 525–547 (YKCLECGERFRQSTHLIRHQRIH). A Glycyl lysine isopeptide (Lys-Gly) (interchain with G-Cter in SUMO2) cross-link involves residue lysine 443.

Belongs to the krueppel C2H2-type zinc-finger protein family.

The protein resides in the nucleus. Its function is as follows. May be involved in transcriptional regulation. This Pan paniscus (Pygmy chimpanzee) protein is Zinc finger protein 394 (ZNF394).